Consider the following 309-residue polypeptide: Syndecan-1 (309 aa).

An N-terminal signal peptide occupies residues 1 to 22 (MRRAALWLWLCALALRLQPVLP). Residues 23 to 253 (QIVTVNVPPE…GLLDRKEVLG (231 aa)) are Extracellular-facing. Disordered regions lie at residues 28–57 (NVPP…DITL) and 145–185 (TTAQ…GGTS). The span at 32 to 42 (EDQDGSGDDSD) shows a compositional bias: acidic residues. O-linked (Xyl...) (chondroitin sulfate) serine glycosylation is present at S37. N-linked (GlcNAc...) asparagine glycosylation is present at N43. O-linked (Xyl...) (heparan sulfate) serine glycans are attached at residues S45 and S47. Residues 173–183 (GQPDQQPPSGG) are compositionally biased toward low complexity. O-linked (Xyl...) (chondroitin sulfate) serine glycans are attached at residues S205 and S215. A helical transmembrane segment spans residues 254 to 274 (GVIAGGLVGLIFAVCLVGFML). Topologically, residues 275–309 (YRMKKKDEGSYSLEEPKQANGGAYQKPTKQEEFYA) are cytoplasmic. Residues 283-309 (GSYSLEEPKQANGGAYQKPTKQEEFYA) are disordered. S284 carries the post-translational modification Phosphoserine.

It belongs to the syndecan proteoglycan family. As to quaternary structure, interacts with CDCP1. Interacts (via C-terminus) with TIAM1 (via PDZ domain). Interacts with MDK. Shedding is enhanced by a number of factors such as heparanase, thrombin or EGF. Also by stress and wound healing. PMA-mediated shedding is inhibited by TIMP3.

The protein resides in the membrane. The protein localises to the secreted. It is found in the extracellular exosome. In terms of biological role, cell surface proteoglycan that contains both heparan sulfate and chondroitin sulfate and that links the cytoskeleton to the interstitial matrix. Regulates exosome biogenesis in concert with SDCBP and PDCD6IP. Able to induce its own expression in dental mesenchymal cells and also in the neighboring dental epithelial cells via an MSX1-mediated pathway. The chain is Syndecan-1 from Mesocricetus auratus (Golden hamster).